The sequence spans 173 residues: Alpha-crystallin A chain (173 aa).

Methionine 1 is subject to N-acetylmethionine. The tract at residues 1–63 is required for complex formation with BFSP1 and BFSP2; the sequence is MDIAIQHPWF…RTVLDSGISE (63 aa). Position 6 is a deamidated glutamine; partial (glutamine 6). The residue at position 45 (serine 45) is a Phosphoserine. Glutamine 50 bears the Deamidated glutamine; partial mark. Residues 52-162 form the sHSP domain; it reads LFRTVLDSGI…GHSERAIPVS (111 aa). Residue lysine 70 is modified to N6-acetyllysine. Glutamine 90 carries the post-translational modification Deamidated glutamine; partial. Lysine 99 bears the N6-acetyllysine mark. Histidine 100 is a binding site for Zn(2+). Asparagine 101 is subject to Deamidated asparagine; partial. Zn(2+)-binding residues include glutamate 102 and histidine 107. The residue at position 122 (serine 122) is a Phosphoserine. Asparagine 123 is subject to Deamidated asparagine; partial. A disordered region spans residues 144 to 173; the sequence is PKVPSGMDAGHSERAIPVSREEKPSSAPSS. Residues 153 to 167 are compositionally biased toward basic and acidic residues; sequence GHSERAIPVSREEKP. Position 154 (histidine 154) interacts with Zn(2+). O-linked (GlcNAc) serine glycosylation occurs at serine 162.

It belongs to the small heat shock protein (HSP20) family. Heteromer composed of three CRYAA and one CRYAB subunits. Inter-subunit bridging via zinc ions enhances stability, which is crucial as there is no protein turn over in the lens. Can also form homodimers and homotetramers (dimers of dimers) which serve as the building blocks of homooligomers. Within homooligomers, the zinc-binding motif is created from residues of 3 different molecules. His-100 and Glu-102 from one molecule are ligands of the zinc ion, and His-107 and His-154 residues from additional molecules complete the site with tetrahedral coordination geometry. Part of a complex required for lens intermediate filament formation composed of BFSP1, BFSP2 and CRYAA. Post-translationally, acetylation at Lys-70 may increase chaperone activity. Undergoes age-dependent proteolytical cleavage at the C-terminus.

Its subcellular location is the cytoplasm. The protein resides in the nucleus. Contributes to the transparency and refractive index of the lens. Acts as a chaperone, preventing aggregation of various proteins under a wide range of stress conditions. Required for the correct formation of lens intermediate filaments as part of a complex composed of BFSP1, BFSP2 and CRYAA. The sequence is that of Alpha-crystallin A chain (CRYAA) from Balaenoptera acutorostrata (Common minke whale).